The sequence spans 708 residues: ARF GTPase-activating protein GIT2 (708 aa).

One can recognise an Arf-GAP domain in the interval 1 to 124; it reads MSKRLRSSDV…AFVHRLPCRE (124 aa). The C4-type zinc finger occupies 11-34; the sequence is CADCNGPDPSWASVNRGTFICDEC. ANK repeat units follow at residues 132-161, 166-195, and 199-228; these read DLSK…QANF, KGST…DPGT, and SGKT…ELTD. The segment at 376–592 is disordered; that stretch reads STQHSTESQD…SPTLPSTEDV (217 aa). Residues 384-401 are compositionally biased toward acidic residues; it reads QDNDQPDYDSVASDEDTD. Residues S393 and S396 each carry the phosphoserine modification. Position 400 is a phosphothreonine (T400). Residues 407–438 show a composition bias toward polar residues; the sequence is SKANRQKLQTLQSENSSLRRQATASACQVQTG. Over residues 504–518 the composition is skewed to low complexity; it reads TSSSSLPSFPSTLSW. Phosphoserine occurs at positions 508, 511, and 519. Basic and acidic residues predominate over residues 519-532; it reads SRDESARRASRLEK. Residue T536 is modified to Phosphothreonine. A Phosphoserine modification is found at S563.

As to quaternary structure, may form heterooligomers with GIT1. Directly interacts with protein Piccolo/PCLO. Interacts with PPFIA1 and PPFIA2. Interacts with ARHGEF7. Identified in a complex with ARHGEF6 and BIN2. Interacts with PAK3. Interacts with PXN/paxillin. Interacts with TGFB1I1. Forms a complex with EFNB1 and GRB4/NCK2. Tyrosine phosphorylated when coexpressed in cells with PTK2/FAK1 and SRC. In terms of tissue distribution, expressed in the brain (at protein level).

Functionally, GTPase-activating protein for ADP ribosylation factor family members, including ARF1. This Mus musculus (Mouse) protein is ARF GTPase-activating protein GIT2 (Git2).